The following is a 909-amino-acid chain: Alanine--tRNA ligase (909 aa).

Positions 600, 604, 704, and 708 each coordinate Zn(2+).

It belongs to the class-II aminoacyl-tRNA synthetase family. The cofactor is Zn(2+).

The protein resides in the cytoplasm. The catalysed reaction is tRNA(Ala) + L-alanine + ATP = L-alanyl-tRNA(Ala) + AMP + diphosphate. Functionally, catalyzes the attachment of alanine to tRNA(Ala) in a two-step reaction: alanine is first activated by ATP to form Ala-AMP and then transferred to the acceptor end of tRNA(Ala). Also edits incorrectly charged Ser-tRNA(Ala) and Gly-tRNA(Ala) via its editing domain. The protein is Alanine--tRNA ligase of Staphylothermus marinus (strain ATCC 43588 / DSM 3639 / JCM 9404 / F1).